Reading from the N-terminus, the 103-residue chain is Co-chaperonin GroES (103 aa).

It belongs to the GroES chaperonin family. As to quaternary structure, heptamer of 7 subunits arranged in a ring. Interacts with the chaperonin GroEL.

The protein localises to the cytoplasm. Together with the chaperonin GroEL, plays an essential role in assisting protein folding. The GroEL-GroES system forms a nano-cage that allows encapsulation of the non-native substrate proteins and provides a physical environment optimized to promote and accelerate protein folding. GroES binds to the apical surface of the GroEL ring, thereby capping the opening of the GroEL channel. The sequence is that of Co-chaperonin GroES from Nostoc punctiforme (strain ATCC 29133 / PCC 73102).